Reading from the N-terminus, the 29-residue chain is Cytochrome b6-f complex subunit 8 (29 aa).

Residues 3 to 23 (IVSLAWAALMIVFTFSLSLVV) form a helical membrane-spanning segment.

The protein belongs to the PetN family. In terms of assembly, the 4 large subunits of the cytochrome b6-f complex are cytochrome b6, subunit IV (17 kDa polypeptide, PetD), cytochrome f and the Rieske protein, while the 4 small subunits are PetG, PetL, PetM and PetN. The complex functions as a dimer.

The protein localises to the plastid membrane. Functionally, component of the cytochrome b6-f complex, which mediates electron transfer between photosystem II (PSII) and photosystem I (PSI), cyclic electron flow around PSI, and state transitions. The sequence is that of Cytochrome b6-f complex subunit 8 from Cuscuta exaltata (Tall dodder).